Consider the following 371-residue polypeptide: Cytochrome b (371 aa).

4 helical membrane-spanning segments follow: residues 25 to 45 (FGSM…FLAI), 69 to 90 (WTMQ…YIHI), 105 to 125 (WLSG…GYVL), and 170 to 190 (FFAL…AHIM). Positions 75 and 89 each coordinate heme b. The heme b site is built by His-174 and His-188. His-193 is a binding site for a ubiquinone. A run of 4 helical transmembrane segments spans residues 218 to 238 (NKDM…LSFL), 280 to 300 (LGGT…PFTH), 312 to 332 (MTQT…WTAT), and 339 to 358 (FMFI…FMNP).

Belongs to the cytochrome b family. The cytochrome bc1 complex contains 3 respiratory subunits (MT-CYB, CYC1 and UQCRFS1), 2 core proteins (UQCRC1 and UQCRC2) and probably 6 low-molecular weight proteins. Heme b is required as a cofactor.

The protein resides in the mitochondrion inner membrane. In terms of biological role, component of the ubiquinol-cytochrome c reductase complex (complex III or cytochrome b-c1 complex) that is part of the mitochondrial respiratory chain. The b-c1 complex mediates electron transfer from ubiquinol to cytochrome c. Contributes to the generation of a proton gradient across the mitochondrial membrane that is then used for ATP synthesis. In Elapsoidea nigra (Usambara garter snake), this protein is Cytochrome b (MT-CYB).